A 328-amino-acid polypeptide reads, in one-letter code: MNHMSDPTTVKVAVIGSGNIGTDLMIKVIRHSRVLEMGAMVGIDPDSDGLARARRLGVPTTSDGVEGLLALPGFADIEVIFDATSAKAHAANAALLQPLGKRLIDLTPAALGPFVVPAVNVDEHRDAPNVNMVTCGGQATIPIVAAVSRVAPVAYAEIVASIASKSAGPGTRANIDEFTETTAHAVETVGGARRGKAIIILNPAEPPLIMRDTVLCLATAPDPATRSAIRESIEEMVARVAGYVPGYRLKQQIQITEIPPDQPVHTLAADGGPAPTHQVSVFLEVEGAAHYLPSYAGNLDIMTSAALRYAESIAATVTAAPADQGATR.

Ser17–Ile20 contacts NAD(+). Residue Cys135 is the Acyl-thioester intermediate of the active site. NAD(+) contacts are provided by residues Ser166–Asn174 and Asn298.

It belongs to the acetaldehyde dehydrogenase family.

The catalysed reaction is acetaldehyde + NAD(+) + CoA = acetyl-CoA + NADH + H(+). The protein is Acetaldehyde dehydrogenase 3 of Nocardia farcinica (strain IFM 10152).